Reading from the N-terminus, the 389-residue chain is Altered inheritance of mitochondria protein 6 (389 aa).

A signal peptide spans 1–23 (MMLLSQPGIWLLVSLFLCSSVNS).

It belongs to the AIM6 family.

This Eremothecium gossypii (strain ATCC 10895 / CBS 109.51 / FGSC 9923 / NRRL Y-1056) (Yeast) protein is Altered inheritance of mitochondria protein 6 (AIM6).